The primary structure comprises 119 residues: MARVKRGVQARRRHKKILDLAKGYYNARRKVFRVAKQAVIKAQQYAYIGRKQKKRNFRSLWITRINAAARINGLSYSRFMNGLLKAGITLDRKVLADIAVHDAAGFTALAEKAKGALAA.

The protein belongs to the bacterial ribosomal protein bL20 family.

Functionally, binds directly to 23S ribosomal RNA and is necessary for the in vitro assembly process of the 50S ribosomal subunit. It is not involved in the protein synthesizing functions of that subunit. The sequence is that of Large ribosomal subunit protein bL20 from Stenotrophomonas maltophilia (strain R551-3).